A 462-amino-acid chain; its full sequence is Squalene synthase LSS (462 aa).

NADP(+) contacts are provided by arginine 48 and arginine 73. 3 residues coordinate Mg(2+): aspartate 76, glutamate 79, and aspartate 80. Residues arginine 214, lysine 314, and arginine 316 each coordinate NADP(+). Helical transmembrane passes span 399–419 (LVLVLGLGYCVYAFNLLPLLW) and 436–456 (LGLPHQIIAVFCVLTAGYQVF).

It belongs to the phytoene/squalene synthase family. Mg(2+) is required as a cofactor.

The protein resides in the membrane. The enzyme catalyses 2 (2E,6E)-farnesyl diphosphate + NADH + H(+) = squalene + 2 diphosphate + NAD(+). The catalysed reaction is 2 (2E,6E)-farnesyl diphosphate + NADPH + H(+) = squalene + 2 diphosphate + NADP(+). Functionally, converts farnesyl diphosphate (FPP) into squalene, a precursor for sterol biosynthesis in eukaryotes. This is Squalene synthase LSS from Botryococcus braunii (Green alga).